We begin with the raw amino-acid sequence, 78 residues long: UPF0291 protein SE_1024 (78 aa).

The segment at 53–78 (TKVIDPEGNDVTPEKLKKIQEEKHNK) is disordered. The span at 64-78 (TPEKLKKIQEEKHNK) shows a compositional bias: basic and acidic residues.

This sequence belongs to the UPF0291 family.

Its subcellular location is the cytoplasm. This is UPF0291 protein SE_1024 from Staphylococcus epidermidis (strain ATCC 12228 / FDA PCI 1200).